Consider the following 130-residue polypeptide: Histone H2A type 1-K (130 aa).

The interval Met1 to Ala22 is disordered. At Ser2 the chain carries N-acetylserine. Ser2 bears the Phosphoserine; by RPS6KA5 mark. At Arg4 the chain carries Citrulline; alternate. Arg4 carries the symmetric dimethylarginine; by PRMT5; alternate modification. An N6-(2-hydroxyisobutyryl)lysine; alternate mark is found at Lys6 and Lys10. At Lys6 the chain carries N6-(beta-hydroxybutyryl)lysine; alternate. Residues Lys6 and Lys10 each carry the N6-acetyllysine; alternate modification. Positions Gln7 to Ser19 are enriched in basic residues. Lys10 is modified (N6-lactoyllysine; alternate). At Lys10 the chain carries N6-succinyllysine; alternate. Residues Lys14 and Lys16 each participate in a glycyl lysine isopeptide (Lys-Gly) (interchain with G-Cter in ubiquitin) cross-link. At Lys37 the chain carries N6-(2-hydroxyisobutyryl)lysine; alternate. Lys37 is subject to N6-(beta-hydroxybutyryl)lysine; alternate. The residue at position 37 (Lys37) is an N6-crotonyllysine; alternate. N6-(2-hydroxyisobutyryl)lysine is present on residues Lys75 and Lys76. At Lys96 the chain carries N6-(2-hydroxyisobutyryl)lysine; alternate. Lys96 carries the post-translational modification N6-succinyllysine; alternate. An N6-glutaryllysine; alternate modification is found at Lys96. N5-methylglutamine is present on Gln105. Position 119 is an N6-(2-hydroxyisobutyryl)lysine; alternate (Lys119). Residues Lys119 and Lys120 each carry the N6-crotonyllysine; alternate modification. Residues Lys119 and Lys120 each carry the N6-glutaryllysine; alternate modification. The residue at position 120 (Lys120) is an N6-(beta-hydroxybutyryl)lysine; alternate. Lys120 participates in a covalent cross-link: Glycyl lysine isopeptide (Lys-Gly) (interchain with G-Cter in ubiquitin); alternate. Residue Thr121 is modified to Phosphothreonine; by DCAF1. N6-(beta-hydroxybutyryl)lysine; alternate is present on Lys126. Lys126 carries the N6-crotonyllysine; alternate modification. At Lys126 the chain carries N6-glutaryllysine; alternate.

It belongs to the histone H2A family. As to quaternary structure, the nucleosome is a histone octamer containing two molecules each of H2A, H2B, H3 and H4 assembled in one H3-H4 heterotetramer and two H2A-H2B heterodimers. The octamer wraps approximately 147 bp of DNA. In terms of processing, deiminated on Arg-4 in granulocytes upon calcium entry. Monoubiquitination of Lys-120 (H2AK119Ub) by RING1, TRIM37 and RNF2/RING2 complex gives a specific tag for epigenetic transcriptional repression and participates in X chromosome inactivation of female mammals. It is involved in the initiation of both imprinted and random X inactivation. Ubiquitinated H2A is enriched in inactive X chromosome chromatin. Ubiquitination of H2A functions downstream of methylation of 'Lys-27' of histone H3 (H3K27me). H2AK119Ub by RNF2/RING2 can also be induced by ultraviolet and may be involved in DNA repair. Following DNA double-strand breaks (DSBs), it is ubiquitinated through 'Lys-63' linkage of ubiquitin moieties by the E2 ligase UBE2N and the E3 ligases RNF8 and RNF168, leading to the recruitment of repair proteins to sites of DNA damage. Ubiquitination at Lys-14 and Lys-16 (H2AK13Ub and H2AK15Ub, respectively) in response to DNA damage is initiated by RNF168 that mediates monoubiquitination at these 2 sites, and 'Lys-63'-linked ubiquitin are then conjugated to monoubiquitin; RNF8 is able to extend 'Lys-63'-linked ubiquitin chains in vitro. Deubiquitinated by USP51 at Lys-14 and Lys-16 (H2AK13Ub and H2AK15Ub, respectively) after damaged DNA is repaired. H2AK119Ub and ionizing radiation-induced 'Lys-63'-linked ubiquitination (H2AK13Ub and H2AK15Ub) are distinct events. Post-translationally, phosphorylation on Ser-2 (H2AS1ph) is enhanced during mitosis. Phosphorylation on Ser-2 by RPS6KA5/MSK1 directly represses transcription. Acetylation of H3 inhibits Ser-2 phosphorylation by RPS6KA5/MSK1. Phosphorylation at Thr-121 (H2AT120ph) by DCAF1 is present in the regulatory region of many tumor suppresor genes and down-regulates their transcription. In terms of processing, symmetric dimethylation on Arg-4 by the PRDM1/PRMT5 complex may play a crucial role in the germ-cell lineage. Glutamine methylation at Gln-105 (H2AQ104me) by FBL is specifically dedicated to polymerase I. It is present at 35S ribosomal DNA locus and impairs binding of the FACT complex. Post-translationally, crotonylation (Kcr) is specifically present in male germ cells and marks testis-specific genes in post-meiotic cells, including X-linked genes that escape sex chromosome inactivation in haploid cells. Crotonylation marks active promoters and enhancers and confers resistance to transcriptional repressors. It is also associated with post-meiotically activated genes on autosomes. In terms of processing, hydroxybutyrylation of histones is induced by starvation. Lactylated in macrophages by EP300/P300 by using lactoyl-CoA directly derived from endogenous or exogenous lactate, leading to stimulates gene transcription.

The protein resides in the nucleus. It is found in the chromosome. Functionally, core component of nucleosome. Nucleosomes wrap and compact DNA into chromatin, limiting DNA accessibility to the cellular machineries which require DNA as a template. Histones thereby play a central role in transcription regulation, DNA repair, DNA replication and chromosomal stability. DNA accessibility is regulated via a complex set of post-translational modifications of histones, also called histone code, and nucleosome remodeling. This Mus musculus (Mouse) protein is Histone H2A type 1-K.